We begin with the raw amino-acid sequence, 1947 residues long: DNA-directed RNA polymerase subunit beta' (1947 aa).

Zn(2+) contacts are provided by C119, C121, C141, and C144. Mg(2+)-binding residues include D1778, D1780, and D1782.

It belongs to the RNA polymerase beta' chain family. RpoC1 subfamily. In plastids the minimal PEP RNA polymerase catalytic core is composed of four subunits: alpha, beta, beta', and beta''. When a (nuclear-encoded) sigma factor is associated with the core the holoenzyme is formed, which can initiate transcription. The cofactor is Mg(2+). Requires Zn(2+) as cofactor.

The protein localises to the plastid. It localises to the chloroplast. The enzyme catalyses RNA(n) + a ribonucleoside 5'-triphosphate = RNA(n+1) + diphosphate. DNA-dependent RNA polymerase catalyzes the transcription of DNA into RNA using the four ribonucleoside triphosphates as substrates. This chain is DNA-directed RNA polymerase subunit beta', found in Oedogonium cardiacum (Filamentous green alga).